Reading from the N-terminus, the 327-residue chain is Gamma-resorcylate decarboxylase (327 aa).

The Zn(2+) site is built by glutamate 8 and histidine 10. 2,6-dihydroxybenzoate contacts are provided by phenylalanine 23, histidine 164, and aspartate 287. Histidine 164 and aspartate 287 together coordinate Zn(2+). Residue aspartate 287 is part of the active site.

This sequence belongs to the metallo-dependent hydrolases superfamily. ACMSD family. Homotetramer. Dimer of dimers. The cofactor is Zn(2+).

The catalysed reaction is 2,6-dihydroxybenzoate + H(+) = resorcinol + CO2. It carries out the reaction 2,3-dihydroxybenzoate + H(+) = catechol + CO2. Its pathway is aromatic compound metabolism. With respect to regulation, inhibited by CuCl(2), monoiodoacetate and diethylpyrocarbonate. Inhibited by 2,3-dihydroxybenzaldehyde, which is an analog of the substrate 2,3-dihydroxybenzoate. Functionally, involved in the gamma-resorcylate (2,6-dihydroxybenzoate) catabolism. Catalyzes the reversible decarboxylation of gamma-resorcylate to resorcinol. The reaction is reversible, but equilibrium greatly favors the decarboxylation reaction. Also catalyzes the decarboxylation of 2,3-dihydroxybenzoate to catechol, but does not act on 2,4-dihydroxybenzoate, 2,5-dihydroxybenzoate, 3,4-dihydroxybenzoate, 3,5-dihydroxybenzoate, 2-hydroxybenzoate, or 3-hydroxybenzoate. Only resorcinol is carboxylated by the reverse reaction. This chain is Gamma-resorcylate decarboxylase, found in Rhizobium sp. (strain MTP-10005).